The primary structure comprises 367 residues: tRNA/tmRNA (uracil-C(5))-methyltransferase (367 aa).

S-adenosyl-L-methionine contacts are provided by Q182, Y210, N215, E231, and D293. The active-site Nucleophile is the C318. E352 acts as the Proton acceptor in catalysis.

It belongs to the class I-like SAM-binding methyltransferase superfamily. RNA M5U methyltransferase family. TrmA subfamily.

It carries out the reaction uridine(54) in tRNA + S-adenosyl-L-methionine = 5-methyluridine(54) in tRNA + S-adenosyl-L-homocysteine + H(+). The enzyme catalyses uridine(341) in tmRNA + S-adenosyl-L-methionine = 5-methyluridine(341) in tmRNA + S-adenosyl-L-homocysteine + H(+). Dual-specificity methyltransferase that catalyzes the formation of 5-methyluridine at position 54 (m5U54) in all tRNAs, and that of position 341 (m5U341) in tmRNA (transfer-mRNA). This is tRNA/tmRNA (uracil-C(5))-methyltransferase from Neisseria meningitidis serogroup C (strain 053442).